Consider the following 360-residue polypeptide: MEAGQQWPGKTDFYLQLPKVELHAHLNGSISSSTMKKLIAKKPHLNVHGHMTMIDKGKKRTLQECFQMFQVIHQLTTSAEDILMVTKDVIKEFADDGVKYLELRSTPREENATGMTRKTYVESVLEGIKQCKQENLDIDVRYLMAIDRRGGPTIARETVELAKEFFLSTENTVLGLDLSGDPTIGQANDFLEPLLEAKKAGLKLALHLAEIPNREKENQMLLSLLPDRIGHGTFLSASEAGALDQVDFVRQHQIPLELCLTSNIKSQTVPSYDQHHFGFWYSIAHPSVICTDDKGVFATYLSQEYQLAAETFNLTPFQVWDLSYESINYIFACDNTRSELRKRWTHLKQKVLNCNEVNYF.

Residues H23 and H25 each coordinate Zn(2+). Residues H25, N27, H73, 105 to 108 (STPR), D147, and G180 contribute to the N(6)-methyl-AMP site. A Zn(2+)-binding site is contributed by H207. N(6)-methyl-AMP contacts are provided by E210, D292, and D293. The active-site Proton donor is the E210. Residue D292 coordinates Zn(2+).

The protein belongs to the metallo-dependent hydrolases superfamily. Adenosine and AMP deaminases family. Monomer. Requires Zn(2+) as cofactor.

The enzyme catalyses N(6)-methyl-AMP + H2O + H(+) = IMP + methylamine. Functionally, catalyzes the hydrolysis of the free cytosolic methylated adenosine nucleotide N(6)-methyl-AMP (N6-mAMP) to produce inositol monophosphate (IMP) and methylamine. Is required for the catabolism of cytosolic N6-mAMP, which is derived from the degradation of mRNA containing N6-methylated adenine (m6A). The chain is N6-Methyl-AMP deaminase (Mapda) from Mus musculus (Mouse).